The primary structure comprises 174 residues: Mediator of RNA polymerase II transcription subunit 30 (174 aa).

The stretch at 113–166 (VEDDSSKLEDRMANQLRAASEERREVLEVNKKLKQKNQQLKMIMDQLRNLIWEI) forms a coiled coil.

This sequence belongs to the Mediator complex subunit 30 family. As to quaternary structure, component of the Mediator complex.

The protein resides in the nucleus. In terms of biological role, component of the Mediator complex, a coactivator involved in the regulated transcription of nearly all RNA polymerase II-dependent genes. Mediator functions as a bridge to convey information from gene-specific regulatory proteins to the basal RNA polymerase II transcription machinery. Mediator is recruited to promoters by direct interactions with regulatory proteins and serves as a scaffold for the assembly of a functional preinitiation complex with RNA polymerase II and the general transcription factors. The polypeptide is Mediator of RNA polymerase II transcription subunit 30 (med30) (Danio rerio (Zebrafish)).